The primary structure comprises 230 residues: 2,3-bisphosphoglycerate-dependent phosphoglycerate mutase (230 aa).

Substrate contacts are provided by residues 8–15 (RHGQSEWN), 21–22 (TG), R60, 87–90 (ERHY), K98, 114–115 (RR), and 183–184 (GN). The Tele-phosphohistidine intermediate role is filled by H9. E87 serves as the catalytic Proton donor/acceptor.

The protein belongs to the phosphoglycerate mutase family. BPG-dependent PGAM subfamily.

It catalyses the reaction (2R)-2-phosphoglycerate = (2R)-3-phosphoglycerate. It functions in the pathway carbohydrate degradation; glycolysis; pyruvate from D-glyceraldehyde 3-phosphate: step 3/5. Functionally, catalyzes the interconversion of 2-phosphoglycerate and 3-phosphoglycerate. The sequence is that of 2,3-bisphosphoglycerate-dependent phosphoglycerate mutase from Lactobacillus acidophilus (strain ATCC 700396 / NCK56 / N2 / NCFM).